A 491-amino-acid polypeptide reads, in one-letter code: Protein nucleotidyltransferase YdiU (491 aa).

Residues G94, G96, R97, K117, D129, G130, R180, and R187 each coordinate ATP. Catalysis depends on D256, which acts as the Proton acceptor. The Mg(2+) site is built by N257 and D266. D266 contacts ATP.

Belongs to the SELO family. Mg(2+) is required as a cofactor. Requires Mn(2+) as cofactor.

It catalyses the reaction L-seryl-[protein] + ATP = 3-O-(5'-adenylyl)-L-seryl-[protein] + diphosphate. The catalysed reaction is L-threonyl-[protein] + ATP = 3-O-(5'-adenylyl)-L-threonyl-[protein] + diphosphate. It carries out the reaction L-tyrosyl-[protein] + ATP = O-(5'-adenylyl)-L-tyrosyl-[protein] + diphosphate. The enzyme catalyses L-histidyl-[protein] + UTP = N(tele)-(5'-uridylyl)-L-histidyl-[protein] + diphosphate. It catalyses the reaction L-seryl-[protein] + UTP = O-(5'-uridylyl)-L-seryl-[protein] + diphosphate. The catalysed reaction is L-tyrosyl-[protein] + UTP = O-(5'-uridylyl)-L-tyrosyl-[protein] + diphosphate. Nucleotidyltransferase involved in the post-translational modification of proteins. It can catalyze the addition of adenosine monophosphate (AMP) or uridine monophosphate (UMP) to a protein, resulting in modifications known as AMPylation and UMPylation. This is Protein nucleotidyltransferase YdiU from Alkaliphilus metalliredigens (strain QYMF).